The chain runs to 56 residues: Large ribosomal subunit protein bL32c (56 aa).

It belongs to the bacterial ribosomal protein bL32 family.

It is found in the plastid. The protein localises to the chloroplast. In Platanus occidentalis (Sycamore), this protein is Large ribosomal subunit protein bL32c.